A 384-amino-acid polypeptide reads, in one-letter code: MFRYLTSGESHGEGLYVILEGVPAGLKVDLDYINHELSRRQLGYGRGERMKIEKDEAQILTGVRGGFATGAPITIKVKNRDYENWEKFMRTTGEIEPGREVTVPRPGHADLAGGLKYGHKDLRNVLERASARETAVRVAAGAVAKLFLAEFGVRIYSHVLRIGSVEVEYPGGLPEEELKKADEHPLRCLDAQVEGRMLKWVDRARENGDTLGGIFEVVVFGLPPGLGSYVHWDRKLDGRLAGALMAIPSAKGVEIGDGIALANIPGRMAVDEIYYENGHFYRKTNKAGGLEGGVTNGMPLIAKVSLKPIPTQVKPLKSVDIVTKETKPAQVERSDITAVPAAGVVGEAVTALVLMESFLEKFGGDRIEETKRNYQNYLQSIANY.

NADP(+) is bound by residues arginine 40 and arginine 46. Residues 128 to 130 (RAS), glycine 292, 307 to 311 (KPIPT), and arginine 333 contribute to the FMN site.

The protein belongs to the chorismate synthase family. In terms of assembly, homotetramer. The cofactor is FMNH2.

The catalysed reaction is 5-O-(1-carboxyvinyl)-3-phosphoshikimate = chorismate + phosphate. Its pathway is metabolic intermediate biosynthesis; chorismate biosynthesis; chorismate from D-erythrose 4-phosphate and phosphoenolpyruvate: step 7/7. Catalyzes the anti-1,4-elimination of the C-3 phosphate and the C-6 proR hydrogen from 5-enolpyruvylshikimate-3-phosphate (EPSP) to yield chorismate, which is the branch point compound that serves as the starting substrate for the three terminal pathways of aromatic amino acid biosynthesis. This reaction introduces a second double bond into the aromatic ring system. In Carboxydothermus hydrogenoformans (strain ATCC BAA-161 / DSM 6008 / Z-2901), this protein is Chorismate synthase.